A 1007-amino-acid polypeptide reads, in one-letter code: MDGVKPVASAEQGGAVEARFTEFCKNGLQLDESTFAQAMKLFEESNHLLSTTSLSAIGNGVPEDSERYWFAFILYSVKRLSEGTAENVQQGNDENGFNLCQILRVSKLNIVDFFKELPQFIVKVGPILGNLYGPDWEKRLEAKELQANFVHLSILSKYYKRAYLEFFSTSGSNLDKQSSVISASGYVSDYHRFGWLLFLALRVHAFSRFKDLVTCTNGLVSILAILILHVPISFRSFTINNYPRFVKKGNKGMDLLASLCDIYETSEDEVRKTMEQTNKVIVDILKKKPCLASECKSENLASIDPDGLVYFEDLMDESSLSSSINILEKDYDAAIRNKGELDERVFINGEDSLLGSGSLSGGAMSISGAKRKIDSLASPAKTITSPLSPNRSPGILGGANSKMAPTPVTTAMTTAKWLRTVISPLPSKPSAELERFLTSCDKDVTSDVIRRANVILEAIFPSIAFGERCVTGSASLMDSIWAQQRRMEAMKLYYRVLEAMCTAEAQVLHANNLTSLLTNERFHRCMLACSAELVLATHKTVTMLFPAVLERTGITAFDLSKVIESFIRHEESLPRELRRHLNSLEERLLESMVWEKGSSMYNSLIVARAALSAEVNRLGLLAEPMPSLDAISMHINASCGGLPPVPSLQKRESSPGQNGDIRSPKRVCPDYRSVLVERNSFTSPVKDRFLALNNLKSKLPPPPLQSAFASPTRPNPGREGETCAETGINIFFSKIIKLAAVRINGMVERLQLSQQMRENVYCLFQQILNRRTSLFFNRHIDQIILCCFYGLAKISQMNLTFREIIHNYRKQPQCKPQIFRSVFVDWSSARRNGKTGKEHVDIITFYNEIFIPAVKPLLMEIGPGGGTTTKTNRVPEVNNNNDAQCPESPKISPFPSLPDMSPKKVSAAHNVYVSPLRSSKMDALISHSSKSYYACVGESTHAYQSPSKDLTAINNRLNSTRKLRGALNFDDVEGLVSDSLVAKSLYLQNGSCASSSGAPLKLEQPDT.

A domain A region spans residues 406-604; it reads TPVTTAMTTA…EKGSSMYNSL (199 aa). A pocket region spans residues 406 to 856; the sequence is TPVTTAMTTA…NEIFIPAVKP (451 aa). Residues 605–725 form a spacer region; sequence IVARAALSAE…PGREGETCAE (121 aa). The tract at residues 644 to 665 is disordered; it reads PVPSLQKRESSPGQNGDIRSPK. The segment at 726 to 856 is domain B; it reads TGINIFFSKI…NEIFIPAVKP (131 aa).

This sequence belongs to the retinoblastoma protein (RB) family.

The protein resides in the nucleus. Functionally, regulator of biological processes that recruits a histone deacetylase to control gene transcription. May play a role in the entry into mitosis, negatively regulating the cell proliferation. Formation of stable complexes with geminiviridae replication-associated proteins may create a cellular environment which favors viral DNA replication. In Vitis vinifera (Grape), this protein is Retinoblastoma-related protein (RBR).